We begin with the raw amino-acid sequence, 470 residues long: Calmodulin-binding receptor-like cytoplasmic kinase 1 (470 aa).

Disordered regions lie at residues 1–29 and 65–128; these read MPMR…SWTD and PTEC…SKSW. Residues 65–82 are compositionally biased toward basic and acidic residues; that stretch reads PTECRSDPGESSTHDRES. Composition is skewed to polar residues over residues 83–98 and 108–121; these read TLSG…SFGR and YRFS…PGKD. One can recognise a Protein kinase domain in the interval 147-423; it reads FSSVHQIGEG…MKGIAEKLWA (277 aa). ATP contacts are provided by residues 153-161 and lysine 175; that span reads IGEGGFGTV. A caM-binding region spans residues 162–185; the sequence is FKGKLDDGTIVAIKRARKNNYGKS. The active-site Proton acceptor is the aspartate 273. Phosphoserine occurs at positions 277 and 308. Threonine 309 carries the phosphothreonine modification. Position 322 is a phosphotyrosine (tyrosine 322).

It belongs to the protein kinase superfamily. Ser/Thr protein kinase family. Interacts with calmodulin (CaM) in a Ca(2+)-dependent manner. Mg(2+) serves as cofactor. Post-translationally, autophosphorylated.

The protein resides in the cytoplasm. It carries out the reaction L-seryl-[protein] + ATP = O-phospho-L-seryl-[protein] + ADP + H(+). It catalyses the reaction L-threonyl-[protein] + ATP = O-phospho-L-threonyl-[protein] + ADP + H(+). Its activity is regulated as follows. Up-regulated by Ca(2+)/CaM. This is Calmodulin-binding receptor-like cytoplasmic kinase 1 (CRCK1) from Arabidopsis thaliana (Mouse-ear cress).